Here is a 665-residue protein sequence, read N- to C-terminus: RNA polymerase II-associated protein 3 (665 aa).

T2 carries the post-translational modification N-acetylthreonine. Residues 8–41 form a TPR 1 repeat; the sequence is IELQLQVKQNAEELQDFMRDLENWEKDIKQKDME. Residues 37–82 are disordered; sequence QKDMELRRQNGVPEENLPPIRNGNFRKKKKGKAKESSKKTREENTK. The span at 69–82 shows a compositional bias: basic and acidic residues; the sequence is AKESSKKTREENTK. Residues S87, S116, S119, and S121 each carry the phosphoserine modification. The tract at residues 109-129 is disordered; that stretch reads DSTHESLSQESESEEDGIHVD. 6 TPR repeats span residues 133–166, 168–200, 201–234, 282–315, 317–349, and 350–383; these read ALVL…DPYN, VLPT…NRSY, TKAY…EPNN, AISE…DGAN, LLPA…DGSY, and SKAF…EPGN. S481 carries the post-translational modification Phosphoserine. A Glycyl lysine isopeptide (Lys-Gly) (interchain with G-Cter in SUMO2) cross-link involves residue K498.

It belongs to the RPAP3 family. Tightly associated with the RNA polymerase II complex. Component of the R2TP complex composed at least of RUVBL1, RUVBL2, RPAP3 and PIHD1. Component of the PAQosome complex which is responsible for the biogenesis of several protein complexes and which consists of R2TP complex members RUVBL1, RUVBL2, RPAP3 and PIH1D1, URI complex members PFDN2, PFDN6, PDRG1, UXT and URI1 as well as ASDURF, POLR2E and DNAAF10/WDR92. Interacts with PIH1D1. Interacts with TSC1 and TSC2. Interacts with PRPF8 and EFTUD2 in a ZNHIT2-dependent manner.

In terms of biological role, forms an interface between the RNA polymerase II enzyme and chaperone/scaffolding protein, suggesting that it is required to connect RNA polymerase II to regulators of protein complex formation. This chain is RNA polymerase II-associated protein 3 (RPAP3), found in Homo sapiens (Human).